The sequence spans 331 residues: Ribosomal RNA small subunit methyltransferase C (331 aa).

The protein belongs to the methyltransferase superfamily. RsmC family. As to quaternary structure, monomer.

It localises to the cytoplasm. It catalyses the reaction guanosine(1207) in 16S rRNA + S-adenosyl-L-methionine = N(2)-methylguanosine(1207) in 16S rRNA + S-adenosyl-L-homocysteine + H(+). Functionally, specifically methylates the guanine in position 1207 of 16S rRNA in the 30S particle. The chain is Ribosomal RNA small subunit methyltransferase C from Pseudomonas putida (strain W619).